We begin with the raw amino-acid sequence, 767 residues long: Polyketide biosynthesis protein PksE (767 aa).

The tract at residues 1–312 is acyl transferase; the sequence is MITYVFPGQG…QRNVQAGITA (312 aa). Catalysis depends on residues serine 87 and histidine 193.

The protein in the N-terminal section; belongs to the FabD family.

The protein resides in the cytoplasm. It catalyses the reaction holo-[ACP] + malonyl-CoA = malonyl-[ACP] + CoA. The protein operates within antibiotic biosynthesis; bacillaene biosynthesis. Its function is as follows. Probably involved in some intermediate steps for the synthesis of the antibiotic polyketide bacillaene which is involved in secondary metabolism. Probably has an acyl transferase activity and could also have a flavin mononucleotide-dependent oxidoreductase activity. The polypeptide is Polyketide biosynthesis protein PksE (pksE) (Bacillus subtilis (strain 168)).